Consider the following 416-residue polypeptide: Xyloglucan O-acetyltransferase 1 (416 aa).

Topologically, residues 1–14 (MGLNEQQNVPSQRK) are cytoplasmic. Residues 15–35 (IIVFIVLAFIPIALFRLCFNN) form a helical; Signal-anchor for type II membrane protein membrane-spanning segment. Over 36 to 416 (PFSSIKDTSL…MIEMLRRWKV (381 aa)) the chain is Lumenal. Cystine bridges form between cysteine 79-cysteine 129, cysteine 100-cysteine 165, cysteine 109-cysteine 395, and cysteine 318-cysteine 391. Asparagine 96 carries an N-linked (GlcNAc...) asparagine glycan. A GDS motif motif is present at residues 152 to 154 (GDS). Serine 154 functions as the Nucleophile in the catalytic mechanism. 3 N-linked (GlcNAc...) asparagine glycosylation sites follow: asparagine 194, asparagine 269, and asparagine 319. The Proton donor role is filled by aspartate 390. The short motif at 390-393 (DCLH) is the DXXH motif element. Histidine 393 (proton acceptor) is an active-site residue.

The protein belongs to the PC-esterase family. TBL subfamily.

Its subcellular location is the golgi apparatus membrane. In terms of biological role, xyloglucan acetyltransferase that catalyzes the acetylation of fucosylated Gal residues on xyloglucan side chains. Predominantly catalyze 6-O-monoacetylation of Gal residues in the Fuc-Gal-Xyl trisaccharide side chains of xyloglucan oligomers. Involved in xyloglucan specific O-acetylation in roots and rosette leaves. In Arabidopsis thaliana (Mouse-ear cress), this protein is Xyloglucan O-acetyltransferase 1.